The sequence spans 300 residues: Dihydroorotate dehydrogenase B (NAD(+)), catalytic subunit (300 aa).

Residues serine 20 and 44 to 45 contribute to the FMN site; that span reads KG. Substrate contacts are provided by residues lysine 44 and 68 to 72; that span reads NAIGL. FMN-binding residues include asparagine 98 and asparagine 125. Asparagine 125 provides a ligand contact to substrate. The active-site Nucleophile is the cysteine 128. Positions 163 and 189 each coordinate FMN. Position 190–191 (190–191) interacts with substrate; it reads NT. Residues glycine 215, 241–242, and 263–264 contribute to the FMN site; these read GG and GT.

This sequence belongs to the dihydroorotate dehydrogenase family. Type 1 subfamily. As to quaternary structure, heterotetramer of 2 PyrK and 2 PyrD type B subunits. The cofactor is FMN.

It is found in the cytoplasm. It carries out the reaction (S)-dihydroorotate + NAD(+) = orotate + NADH + H(+). The protein operates within pyrimidine metabolism; UMP biosynthesis via de novo pathway; orotate from (S)-dihydroorotate (NAD(+) route): step 1/1. Functionally, catalyzes the conversion of dihydroorotate to orotate with NAD(+) as electron acceptor. The chain is Dihydroorotate dehydrogenase B (NAD(+)), catalytic subunit (pyrD) from Lachnoclostridium phytofermentans (strain ATCC 700394 / DSM 18823 / ISDg) (Clostridium phytofermentans).